The primary structure comprises 551 residues: MDRRRFIKGSMAMAAVCGTSGIASLFSQAAFAADSDIADGQTQRFDLSILQSMAHDLAQTAWRGAPRPLPDTLATMTPQAYNSIQYDAEKSLWHNVENRQLDAQFFHMGMGFRRRVRMFSVDPATHLAREIHFRPELFKYNDAGVDTKQLEGQSDLGFAGFRVFKAPELARRDVVSFLGASYFRAVDDTYQYGLSARGLAIDTYTDSKEEFPDFTAFWFDTVKPGATTFTVYALLDSASITGAYKFTIHCEKNQVIMDVENHLYARKDIKQLGIAPMTSMFSCGTNERRMCDTIHPQIHDSDRLSMWRGNGEWICRPLNNPQKLQFNAYTDNNPKGFGLLQLDRDFSHYQDIMGWYNKRPSLWVEPRNKWGKGTIGLMEIPTTGETLDNIVCFWQPEKAVKAGDEFAFQYRLYWSAQPPVHCPLARVMATRTGMGGFPEGWAPGEHYPEKWARRFAVDFVGGDLKAAAPKGIEPVITLSSGEAKQIEILYIEPIDGYRIQFDWYPTSDSTDPVDMRMYLRCQGDAISETWLYQYFPPAPDKRQYVDDRVMS.

The tat-type signal signal peptide spans M1 to A32.

This sequence belongs to the OpgD/OpgG family. In terms of processing, predicted to be exported by the Tat system. The position of the signal peptide cleavage has not been experimentally proven.

The protein resides in the periplasm. The protein operates within glycan metabolism; osmoregulated periplasmic glucan (OPG) biosynthesis. Probably involved in the control of the structural glucose backbone of osmoregulated periplasmic glucans (OPGs). This Escherichia coli O127:H6 (strain E2348/69 / EPEC) protein is Glucans biosynthesis protein D.